Reading from the N-terminus, the 6269-residue chain is Nonribosomal peptide synthetase 1 (6269 aa).

Residues 249–781 form an adenylation 1 region; sequence ENDWSRVCSF…VSGKLDRKSI (533 aa). Residues 803-879 enclose the Carrier 1 domain; it reads RAANSTEDQL…ELATRVKGVT (77 aa). Residue serine 840 is modified to O-(pantetheine 4'-phosphoryl)serine. The segment at 894-1342 is epimerase 1; it reads LSPIQKLHFM…TLSDFPMLSL (449 aa). Residues 1373-1775 form a condensation 1 region; sequence SRMQQGILLS…FLQSLENIIH (403 aa). The adenylation 2 stretch occupies residues 1725–2333; the sequence is HDPAEFPVYV…TGLLDRWFLR (609 aa). A disordered region spans residues 2364-2386; it reads KPSPSQLLPSSTSATHRSSGTST. Positions 2367 to 2376 are enriched in low complexity; that stretch reads PSQLLPSSTS. Residues 2377-2386 show a composition bias toward polar residues; it reads ATHRSSGTST. Residues 2597–2670 form a condensation 2 region; sequence WRKYLADVES…TGSEEVCYGY (74 aa). The tract at residues 2845–3368 is adenylation 3; that stretch reads RCAHEIIEQQ…SGKLDRKKLR (524 aa). The Carrier 2 domain occupies 3392–3468; sequence ASDEGVEGTL…NMAKRCGMLQ (77 aa). Residue serine 3429 is modified to O-(pantetheine 4'-phosphoryl)serine. The condensation 3 stretch occupies residues 3512 to 3898; that stretch reads CSPVQEGLLT…GQFSFVLEQL (387 aa). Residues 3919–4454 form an adenylation 4 region; sequence DSKEVALWNK…VSGKLDRKKI (536 aa). The Carrier 3 domain occupies 4487-4563; the sequence is EDKSTAAKIL…ELIQAAEVET (77 aa). Serine 4524 carries the O-(pantetheine 4'-phosphoryl)serine modification. The epimerase 2 stretch occupies residues 4578–5024; sequence LSPIQNLYFK…DFPLLPITYD (447 aa). Positions 5052-5466 are condensation 4; that stretch reads SSVQEGILLS…PSQLVSELDL (415 aa). A Carrier 4 domain is found at 5552–5628; it reads SKLMEPEKRL…DMLAAISASN (77 aa). The residue at position 5589 (serine 5589) is an O-(pantetheine 4'-phosphoryl)serine. The disordered stretch occupies residues 5628-5658; it reads NSSSALEPDSPADSNNEKPAEPPRLVELERN. The span at 5642-5657 shows a compositional bias: basic and acidic residues; that stretch reads NNEKPAEPPRLVELER. Residues 5720-6067 are condensation 5; it reads FFFDGRGSLD…SSSDGKLGVS (348 aa). Residues 6139–6220 form the Carrier 5 domain; sequence SDILVHSDVV…GQMAVLTLHN (82 aa).

This sequence belongs to the NRP synthetase family. Post-translationally, the thiolation domains are 4'-phosphopantetheinylated.

Functionally, nonribosomal peptide synthesis (NRPS) is a key mechanism responsible for the biosynthesis of bioactive metabolites which are potentially contributing to organismal virulence. Contributes to improved fungal tolerance against oxidative stress, during the infection process. The chain is Nonribosomal peptide synthetase 1 (NRPS1) from Aspergillus fumigatus (strain ATCC MYA-4609 / CBS 101355 / FGSC A1100 / Af293) (Neosartorya fumigata).